The sequence spans 737 residues: MPRYKTVEQVLSLMKDITRVRNIGIIAHVDHGKTTTSDTLLAAAGIISQKVAGEALALDYLSVEQQRGITVKAANISLYHEIEGKGYVINLIDTPGHVDFSGRVTRSLRILDGSIVVVDAVEGIMTQTETVLRQSLEERVRPILFINKVDRLVKELKLSPQEIQKKLIDMIVEINNLIEMYAEPEYKDAWKIKPELGNVVFGSAKDKWGFSVPIAQKKGVKFSDVVNAYSSGDKSKVEELANRVPIHEALLETVIKFVPNPRDAQKYRIPKIWKGDLDSDIAKAMINADPNGPIVLMISDMKVDPHAGLVATGRVFSGTLRAGEEIWLVNAKRQQRVLQVSLYMGPTRELAEEIPAGNIAAALGLDQARSGETAVDIKYKDANVGSFESLHYVSEPVVTISVEPKNPKDLNKMIDALRKLSIEDPNLLVKINEETGEYLLSGMGFLHLEVSLQLLKENYGVDVVTSPPIVVYRESIRTKSQVFEGKSPNKHNKLYISVEPLNEQTIELIANGTIKEDMDSKEMARILKEQADWDYDEAKKIVAIDENINVFVNATSGVQHLREVMDTILQGFRLAMKEGPLAHEPIRGLKVVLHDAIIHEDPAHRGPAQLYPAVRNAIFAGFLTSKPTLLEPLQKLDIRVPMDFVGNVSGVITRKRGKILNMTQMGSIARITAEIPVSESFELASELRAASAGRAFWGTEFSRWAPVPDSLLLDVIMKIRERKGLPKELPKVEDFLA.

The region spanning 18–262 (TRVRNIGIIA…TVIKFVPNPR (245 aa)) is the tr-type G domain. GTP-binding positions include 27–34 (AHVDHGKT), 93–97 (DTPGH), and 147–150 (NKVD). Histidine 604 is subject to Diphthamide.

It belongs to the TRAFAC class translation factor GTPase superfamily. Classic translation factor GTPase family. EF-G/EF-2 subfamily.

It is found in the cytoplasm. Its function is as follows. Catalyzes the GTP-dependent ribosomal translocation step during translation elongation. During this step, the ribosome changes from the pre-translocational (PRE) to the post-translocational (POST) state as the newly formed A-site-bound peptidyl-tRNA and P-site-bound deacylated tRNA move to the P and E sites, respectively. Catalyzes the coordinated movement of the two tRNA molecules, the mRNA and conformational changes in the ribosome. The chain is Elongation factor 2 (fusA) from Sulfurisphaera tokodaii (strain DSM 16993 / JCM 10545 / NBRC 100140 / 7) (Sulfolobus tokodaii).